The sequence spans 204 residues: Large ribosomal subunit protein eL15 (204 aa).

It belongs to the eukaryotic ribosomal protein eL15 family.

This is Large ribosomal subunit protein eL15 (RpL15) from Anopheles gambiae (African malaria mosquito).